The primary structure comprises 219 residues: Response regulator ArlR (219 aa).

In terms of domain architecture, Response regulatory spans 3-116 (NILIVEDEQN…ELLARIRAVL (114 aa)). A 4-aspartylphosphate modification is found at Asp-52. The segment at residues 122–219 (KDVLDINGII…TVRGVGYVIR (98 aa)) is a DNA-binding region (ompR/PhoB-type).

In terms of processing, phosphorylated by ArlS.

The protein resides in the cytoplasm. Functionally, member of the two-component regulatory system ArlS/ArlR. This chain is Response regulator ArlR (arlR), found in Staphylococcus epidermidis (strain ATCC 12228 / FDA PCI 1200).